Consider the following 126-residue polypeptide: Aspartate 1-decarboxylase (126 aa).

The Schiff-base intermediate with substrate; via pyruvic acid role is filled by S25. The residue at position 25 (S25) is a Pyruvic acid (Ser). A substrate-binding site is contributed by T57. Residue Y58 is the Proton donor of the active site. 73 to 75 (GAA) serves as a coordination point for substrate.

The protein belongs to the PanD family. In terms of assembly, heterooctamer of four alpha and four beta subunits. Pyruvate serves as cofactor. Is synthesized initially as an inactive proenzyme, which is activated by self-cleavage at a specific serine bond to produce a beta-subunit with a hydroxyl group at its C-terminus and an alpha-subunit with a pyruvoyl group at its N-terminus.

Its subcellular location is the cytoplasm. The enzyme catalyses L-aspartate + H(+) = beta-alanine + CO2. It participates in cofactor biosynthesis; (R)-pantothenate biosynthesis; beta-alanine from L-aspartate: step 1/1. Functionally, catalyzes the pyruvoyl-dependent decarboxylation of aspartate to produce beta-alanine. This Pseudomonas aeruginosa (strain LESB58) protein is Aspartate 1-decarboxylase.